Reading from the N-terminus, the 394-residue chain is Alanine racemase 2 (394 aa).

Lysine 39 functions as the Proton acceptor; specific for D-alanine in the catalytic mechanism. The residue at position 39 (lysine 39) is an N6-(pyridoxal phosphate)lysine. Arginine 139 contributes to the substrate binding site. Residue tyrosine 272 is the Proton acceptor; specific for L-alanine of the active site. Residue methionine 320 coordinates substrate.

This sequence belongs to the alanine racemase family. Requires pyridoxal 5'-phosphate as cofactor.

It catalyses the reaction L-alanine = D-alanine. The protein operates within amino-acid biosynthesis; D-alanine biosynthesis; D-alanine from L-alanine: step 1/1. Functionally, catalyzes the interconversion of L-alanine and D-alanine. May also act on other amino acids. The chain is Alanine racemase 2 (alr2) from Bacillus subtilis (strain 168).